The following is a 100-amino-acid chain: Small ribosomal subunit protein uS14c (100 aa).

The protein belongs to the universal ribosomal protein uS14 family. In terms of assembly, part of the 30S ribosomal subunit.

It localises to the plastid. The protein resides in the chloroplast. Binds 16S rRNA, required for the assembly of 30S particles. The sequence is that of Small ribosomal subunit protein uS14c from Adiantum capillus-veneris (Maidenhair fern).